We begin with the raw amino-acid sequence, 443 residues long: MESLASLYKNHIATLQERTRDALTRFKLDALLIHSGELFNVFLDDHPYPFKVNPQFKAWVPVTQVPNCWLLVDGVNKPKLWFYLPVDYWHNVEPLPTSFWTEDVEVIALPKADGIGSLLPAARGNIGYIGPVPERALQLGIEASNINPKGVIDYLHYYRSFKTEYELACMREAQKMAVNGHRAAEEAFRSGMSEFDINIAYLTATGHRDTDVPYSNIVALNEHAAVLHYTKLDHQASEEMRSFLLDAGAEYNGYAADLTRTWSAKSDNDYAQLVKDVNDEQLALIATMKAGVSYVDYHIQFHQRIAKLLRKHQIITDMSEEAMVENDLTGPFMPHGIGHPLGLQVHDVAGFMQDDSGTHLAAPAKYPYLRCTRILQPGMVLTIEPGIYFIESLLAPWREGQFSKHFNWQKIEALKPFGGIRIEDNVVIHENNVENMTRDLKLA.

Aspartate 246, aspartate 257, histidine 339, glutamate 384, and glutamate 423 together coordinate Mn(2+).

This sequence belongs to the peptidase M24B family. Bacterial-type prolidase subfamily. The cofactor is Mn(2+).

The catalysed reaction is Xaa-L-Pro dipeptide + H2O = an L-alpha-amino acid + L-proline. Functionally, splits dipeptides with a prolyl residue in the C-terminal position. The sequence is that of Xaa-Pro dipeptidase from Escherichia coli O157:H7.